The chain runs to 651 residues: DNA ligase (651 aa).

Residues 30–34 (DEEYD), 79–80 (SM), and Glu-105 each bind NAD(+). The active-site N6-AMP-lysine intermediate is the Lys-107. 3 residues coordinate NAD(+): Arg-128, Glu-162, and Lys-301. 4 residues coordinate Zn(2+): Cys-395, Cys-398, Cys-411, and Cys-416. Positions 570–651 (ALNENISNKT…NALLGGDDEV (82 aa)) constitute a BRCT domain.

The protein belongs to the NAD-dependent DNA ligase family. LigA subfamily. Mg(2+) is required as a cofactor. Mn(2+) serves as cofactor.

The catalysed reaction is NAD(+) + (deoxyribonucleotide)n-3'-hydroxyl + 5'-phospho-(deoxyribonucleotide)m = (deoxyribonucleotide)n+m + AMP + beta-nicotinamide D-nucleotide.. Functionally, DNA ligase that catalyzes the formation of phosphodiester linkages between 5'-phosphoryl and 3'-hydroxyl groups in double-stranded DNA using NAD as a coenzyme and as the energy source for the reaction. It is essential for DNA replication and repair of damaged DNA. The sequence is that of DNA ligase from Campylobacter lari (strain RM2100 / D67 / ATCC BAA-1060).